Reading from the N-terminus, the 722-residue chain is Pesticidal crystal protein Cry22Aa (722 aa).

Its function is as follows. Promotes colloidosmotic lysis by binding to the midgut epithelial cells of hymenopteran species. This chain is Pesticidal crystal protein Cry22Aa (cry22Aa), found in Bacillus thuringiensis.